The following is a 495-amino-acid chain: Membrane-bound glycerophospholipid O-acyltransferase 1 (495 aa).

The next 6 helical transmembrane spans lie at 34 to 54, 70 to 90, 126 to 146, 180 to 200, 238 to 258, and 297 to 317; these read VNFV…RIYL, IFGI…LFVL, IYIF…MIVT, PSFL…AGPC, TGAV…FLTL, and YFAW…FSGV. Residues Asn-350 and His-381 contribute to the active site. 3 consecutive transmembrane segments (helical) span residues 371–391, 426–446, and 450–470; these read VLTF…YFTF, TWAV…MLAV, and ISLY…IILF. Ser-488 is subject to Phosphoserine.

The protein belongs to the membrane-bound acyltransferase family. As to expression, expressed in neutrophils.

It is found in the endoplasmic reticulum membrane. The enzyme catalyses a 1-acyl-sn-glycero-3-phospho-L-serine + an acyl-CoA = a 1,2-diacyl-sn-glycero-3-phospho-L-serine + CoA. It carries out the reaction a 1-acyl-sn-glycero-3-phosphocholine + an acyl-CoA = a 1,2-diacyl-sn-glycero-3-phosphocholine + CoA. It catalyses the reaction a 1-acyl-sn-glycero-3-phosphoethanolamine + an acyl-CoA = a 1,2-diacyl-sn-glycero-3-phosphoethanolamine + CoA. The catalysed reaction is 1-(9Z-octadecenoyl)-sn-glycero-3-phospho-L-serine + (9Z)-octadecenoyl-CoA = 1,2-di-(9Z)-octadecenoyl-sn-glycero-3-phospho-L-serine + CoA. The enzyme catalyses 1-(9Z-octadecenoyl)-sn-glycero-3-phospho-L-serine + octadecanoyl-CoA = 1-(9Z-octadecenoyl)-2-octadecanoyl-sn-glycero-3-phospho-L-serine + CoA. It carries out the reaction 1-(9Z-octadecenoyl)-sn-glycero-3-phospho-L-serine + (9Z)-hexadecenoyl-CoA = 1-(9Z-octadecenoyl)-2-(9Z-hexadecenoyl)-sn-glycero-3-phospho-L-serine + CoA. It catalyses the reaction 1-(9Z-octadecenoyl)-sn-glycero-3-phospho-L-serine + (9Z,12Z)-octadecadienoyl-CoA = 1-(9Z-octadecenoyl)-2-(9Z,12Z-octadienoyl)-sn-glycero-3-phospho-L-serine + CoA. The catalysed reaction is 1-hexadecanoyl-sn-glycero-3-phosphocholine + (9Z)-octadecenoyl-CoA = 1-hexadecanoyl-2-(9Z-octadecenoyl)-sn-glycero-3-phosphocholine + CoA. The enzyme catalyses a 1-O-(1Z-alkenyl)-sn-glycero-3-phosphoethanolamine + (9Z)-octadecenoyl-CoA = 1-O-(1Z)-alkenyl-2-(9Z)-octadecenoyl-sn-glycero-3-phosphoethanolamine + CoA. It carries out the reaction 1-octadecanoyl-sn-glycero-3-phosphoethanolamine + (9Z)-octadecenoyl-CoA = 1-octadecanoyl-2-(9Z-octadecenoyl)-sn-glycero-3-phosphoethanolamine + CoA. It catalyses the reaction 1-(9Z-octadecenoyl)-sn-glycero-3-phosphoethanolamine + (9Z)-octadecenoyl-CoA = 1,2-di-(9Z-octadecenoyl)-sn-glycero-3-phosphoethanolamine + CoA. The catalysed reaction is 1-hexadecanoyl-sn-glycero-3-phosphoethanolamine + (9Z)-octadecenoyl-CoA = 1-hexadecanoyl-2-(9Z-octadecenoyl)-sn-glycero-3-phosphoethanolamine + CoA. The enzyme catalyses 1-(10Z-heptadecenoyl)-sn-glycero-3-phosphoethanolamine + hexadecanoyl-CoA = 1-(10Z-heptadecenoyl)-2-hexadecanoyl-sn-glycero-3-phosphoethanolamine + CoA. It carries out the reaction 1-(10Z-heptadecenoyl)-sn-glycero-3-phosphoethanolamine + (9Z)-octadecenoyl-CoA = 1-(10Z-heptadecenoyl)-2-(9Z-octadecenoyl)-sn-glycero-3-phosphoethanolamine + CoA. It participates in lipid metabolism; phospholipid metabolism. Its activity is regulated as follows. Partially inhibited by thimerosal. Its function is as follows. Acyltransferase which catalyzes the transfer of an acyl group from an acyl-CoA towards a lysophospholipid producing a phospholipid and participates in the reacylation step of the phospholipid remodeling pathway also known as the Lands cycle. Acts on lysophosphatidylserine (1-acyl-2-hydroxy-sn-glycero-3-phospho-L-serine or LPS) and lysophosphatidylethanolamine (1-acyl-sn-glycero-3-phosphoethanolamine or LPE), and to a lesser extend lysophosphatidylcholine. Prefers oleoyl-CoA as the acyl donor and 1-oleoyl-LPE as acceptor. May play a role in neurite outgrowth during neuronal differentiation. The chain is Membrane-bound glycerophospholipid O-acyltransferase 1 from Homo sapiens (Human).